Here is a 98-residue protein sequence, read N- to C-terminus: NADH-ubiquinone oxidoreductase chain 4L (98 aa).

3 consecutive transmembrane segments (helical) span residues 2–22, 28–48, and 61–81; these read PSIS…MLMF, SSLL…TLII, and IMLL…LVMV.

It belongs to the complex I subunit 4L family. In terms of assembly, core subunit of respiratory chain NADH dehydrogenase (Complex I) which is composed of 45 different subunits.

The protein resides in the mitochondrion inner membrane. The enzyme catalyses a ubiquinone + NADH + 5 H(+)(in) = a ubiquinol + NAD(+) + 4 H(+)(out). In terms of biological role, core subunit of the mitochondrial membrane respiratory chain NADH dehydrogenase (Complex I) which catalyzes electron transfer from NADH through the respiratory chain, using ubiquinone as an electron acceptor. Part of the enzyme membrane arm which is embedded in the lipid bilayer and involved in proton translocation. The polypeptide is NADH-ubiquinone oxidoreductase chain 4L (MT-ND4L) (Allocebus trichotis (Hairy-eared dwarf lemur)).